The sequence spans 361 residues: Phosphoserine aminotransferase (361 aa).

Residue arginine 43 coordinates L-glutamate. Pyridoxal 5'-phosphate contacts are provided by residues 77 to 78 (AS), tryptophan 103, threonine 153, aspartate 173, and glutamine 196. At lysine 197 the chain carries N6-(pyridoxal phosphate)lysine. A pyridoxal 5'-phosphate-binding site is contributed by 238–239 (NT).

It belongs to the class-V pyridoxal-phosphate-dependent aminotransferase family. SerC subfamily. As to quaternary structure, homodimer. The cofactor is pyridoxal 5'-phosphate.

It localises to the cytoplasm. The catalysed reaction is O-phospho-L-serine + 2-oxoglutarate = 3-phosphooxypyruvate + L-glutamate. It carries out the reaction 4-(phosphooxy)-L-threonine + 2-oxoglutarate = (R)-3-hydroxy-2-oxo-4-phosphooxybutanoate + L-glutamate. It functions in the pathway amino-acid biosynthesis; L-serine biosynthesis; L-serine from 3-phospho-D-glycerate: step 2/3. Its pathway is cofactor biosynthesis; pyridoxine 5'-phosphate biosynthesis; pyridoxine 5'-phosphate from D-erythrose 4-phosphate: step 3/5. In terms of biological role, catalyzes the reversible conversion of 3-phosphohydroxypyruvate to phosphoserine and of 3-hydroxy-2-oxo-4-phosphonooxybutanoate to phosphohydroxythreonine. This Pseudomonas fluorescens (strain SBW25) protein is Phosphoserine aminotransferase.